Here is a 184-residue protein sequence, read N- to C-terminus: dCTP deaminase (184 aa).

DCTP is bound at residue 107-112; it reads KSTYAR. The active-site Proton donor/acceptor is the glutamate 133. Residues glutamine 152, tyrosine 166, and glutamine 176 each contribute to the dCTP site.

This sequence belongs to the dCTP deaminase family. In terms of assembly, homotrimer.

The enzyme catalyses dCTP + H2O + H(+) = dUTP + NH4(+). Its pathway is pyrimidine metabolism; dUMP biosynthesis; dUMP from dCTP (dUTP route): step 1/2. Functionally, catalyzes the deamination of dCTP to dUTP. This is dCTP deaminase from Herpetosiphon aurantiacus (strain ATCC 23779 / DSM 785 / 114-95).